A 488-amino-acid chain; its full sequence is DNA polymerase II small subunit (488 aa).

This sequence belongs to the DNA polymerase delta/II small subunit family. Heterodimer of a large subunit and a small subunit.

The enzyme catalyses DNA(n) + a 2'-deoxyribonucleoside 5'-triphosphate = DNA(n+1) + diphosphate. The catalysed reaction is Exonucleolytic cleavage in the 3'- to 5'-direction to yield nucleoside 5'-phosphates.. In terms of biological role, possesses two activities: a DNA synthesis (polymerase) and an exonucleolytic activity that degrades single-stranded DNA in the 3' to 5' direction. Has a template-primer preference which is characteristic of a replicative DNA polymerase. This is DNA polymerase II small subunit (polB) from Archaeoglobus fulgidus (strain ATCC 49558 / DSM 4304 / JCM 9628 / NBRC 100126 / VC-16).